Here is a 188-residue protein sequence, read N- to C-terminus: Elongation factor P (188 aa).

It belongs to the elongation factor P family.

It is found in the cytoplasm. Its pathway is protein biosynthesis; polypeptide chain elongation. Functionally, involved in peptide bond synthesis. Stimulates efficient translation and peptide-bond synthesis on native or reconstituted 70S ribosomes in vitro. Probably functions indirectly by altering the affinity of the ribosome for aminoacyl-tRNA, thus increasing their reactivity as acceptors for peptidyl transferase. The protein is Elongation factor P of Rickettsia typhi (strain ATCC VR-144 / Wilmington).